The chain runs to 543 residues: Glucose-6-phosphate isomerase (543 aa).

Glu-351 functions as the Proton donor in the catalytic mechanism. Residues His-382 and Lys-511 contribute to the active site.

The protein belongs to the GPI family.

The protein localises to the cytoplasm. The catalysed reaction is alpha-D-glucose 6-phosphate = beta-D-fructose 6-phosphate. Its pathway is carbohydrate biosynthesis; gluconeogenesis. The protein operates within carbohydrate degradation; glycolysis; D-glyceraldehyde 3-phosphate and glycerone phosphate from D-glucose: step 2/4. Functionally, catalyzes the reversible isomerization of glucose-6-phosphate to fructose-6-phosphate. In Hydrogenovibrio crunogenus (strain DSM 25203 / XCL-2) (Thiomicrospira crunogena), this protein is Glucose-6-phosphate isomerase.